Reading from the N-terminus, the 94-residue chain is Protein S100-A1 (94 aa).

EF-hand domains follow at residues I13–V48 and K50–A85. K28, E33, D63, N65, D67, E69, and E74 together coordinate Ca(2+). Residue C86 is modified to S-nitrosocysteine.

The protein belongs to the S-100 family. As to quaternary structure, dimer of either two alpha chains, or two beta chains, or one alpha and one beta chain. Also forms heterodimers with S100P. Interacts with AGER. Interacts with CAPZA1. Interacts with FKBP4. Interacts with RYR1 and RYR2. Interacts with CACYBP in a calcium-dependent manner. Interacts with PPP5C (via TPR repeats); the interaction is calcium-dependent and modulates PPP5C activity. Interacts with ATP2A2 and PLN in a Ca(2+)-dependent manner. Interacts with mitochondrial F1-ATPase subunits ATP5F1A and ATP5F1B; these interactions increase F1-ATPase activity. Glutathionylated; glutathionylation increases affinity to calcium about 10-fold. In terms of tissue distribution, expressed in the cardiac and the skeletal muscles.

The protein resides in the cytoplasm. It localises to the sarcoplasmic reticulum. Its subcellular location is the mitochondrion. Functionally, small calcium binding protein that plays important roles in several biological processes such as Ca(2+) homeostasis, chondrocyte biology and cardiomyocyte regulation. In response to an increase in intracellular Ca(2+) levels, binds calcium which triggers conformational changes. These changes allow interactions with specific target proteins and modulate their activity. Regulates a network in cardiomyocytes controlling sarcoplasmic reticulum Ca(2+) cycling and mitochondrial function through interaction with the ryanodine receptors RYR1 and RYR2, sarcoplasmic reticulum Ca(2+)-ATPase/ATP2A2 and mitochondrial F1-ATPase. Facilitates diastolic Ca(2+) dissociation and myofilament mechanics in order to improve relaxation during diastole. In Mus musculus (Mouse), this protein is Protein S100-A1 (S100a1).